The primary structure comprises 93 residues: M-zodatoxin-Lt5a (93 aa).

The signal sequence occupies residues 1–22 (MKYCVVILALLVALVCITESRS). The propeptide occupies 23–64 (TETGYAVAETLEDNDLDELQAYLEEIAEASEMEDFSNIEEAR). Positions 61-64 (EEAR) match the Processing quadruplet motif motif. Leu-92 is modified (leucine amide).

In terms of processing, cleavage of the propeptide depends on the processing quadruplet motif (XXXR, with at least one of X being E). Expressed by the venom gland.

The protein localises to the secreted. In terms of biological role, has antimicrobial activity against. Gram-positive bacteria (A.globiformis VKM Ac-1112 (MIC=1.1 uM), and B.subtilis VKM B-501 (MIC=0.6 uM)), Gram-negative bacteria (E.coli DH5-alpha (MIC=0.6 uM), E.coli MH1 (MIC=0.6 uM), and P.aeruginosa PAO1 (MIC=18 uM)), and yeasts (P.pastoris GS115 (MIC&gt;37 uM), and S.cerevisiae Y190 (MIC&gt;37 uM)). Also has a moderate hemolytic activity against rabbit erythrocytes. Causes paralysis, but is not lethal when injected into insect (M.domestica) larvae. This Lachesana tarabaevi (Spider) protein is M-zodatoxin-Lt5a.